A 329-amino-acid polypeptide reads, in one-letter code: GTPase Obg (329 aa).

In terms of domain architecture, Obg spans 1-159; that stretch reads MQFIDEAKIF…MWVWLHLKLL (159 aa). Residues 160–327 form the OBG-type G domain; the sequence is SDVGLVGLPN…LLANILSELQ (168 aa). GTP contacts are provided by residues 166–173, 191–195, 212–215, 279–282, and 308–310; these read GLPNAGKS, FTTLT, DIPG, TKTD, and SSY. The Mg(2+) site is built by Ser173 and Thr193.

This sequence belongs to the TRAFAC class OBG-HflX-like GTPase superfamily. OBG GTPase family. As to quaternary structure, monomer. Mg(2+) is required as a cofactor.

It is found in the cytoplasm. Its function is as follows. An essential GTPase which binds GTP, GDP and possibly (p)ppGpp with moderate affinity, with high nucleotide exchange rates and a fairly low GTP hydrolysis rate. Plays a role in control of the cell cycle, stress response, ribosome biogenesis and in those bacteria that undergo differentiation, in morphogenesis control. The protein is GTPase Obg of Orientia tsutsugamushi (strain Ikeda) (Rickettsia tsutsugamushi).